We begin with the raw amino-acid sequence, 198 residues long: Ribonuclease HII (198 aa).

Positions 14–198 (GVIAGVDEVG…KNFAPISRAL (185 aa)) constitute an RNase H type-2 domain. A divalent metal cation contacts are provided by Asp20, Glu21, and Asp112.

The protein belongs to the RNase HII family. The cofactor is Mn(2+). Mg(2+) is required as a cofactor.

It localises to the cytoplasm. The enzyme catalyses Endonucleolytic cleavage to 5'-phosphomonoester.. Functionally, endonuclease that specifically degrades the RNA of RNA-DNA hybrids. The chain is Ribonuclease HII from Wolbachia pipientis wMel.